The following is a 271-amino-acid chain: Phosphatidylinositol transfer protein beta isoform (271 aa).

K215 carries the post-translational modification N6-acetyllysine. Position 262 is a phosphoserine (S262).

Belongs to the PtdIns transfer protein family. PI transfer class I subfamily. In terms of processing, constitutive phosphorylation of Ser-262 has no effect on phospholipid transfer activity but is required for Golgi targeting. Expressed abundantly in brain, kidney, liver, and lung, but in a lesser amount in testis.

It localises to the golgi apparatus. The protein localises to the golgi apparatus membrane. The protein resides in the endoplasmic reticulum membrane. It carries out the reaction a 1,2-diacyl-sn-glycero-3-phosphocholine(in) = a 1,2-diacyl-sn-glycero-3-phosphocholine(out). It catalyses the reaction a 1,2-diacyl-sn-glycero-3-phospho-(1D-myo-inositol)(in) = a 1,2-diacyl-sn-glycero-3-phospho-(1D-myo-inositol)(out). The catalysed reaction is an N-(acyl)-sphingosylphosphocholine(in) = an N-(acyl)-sphingosylphosphocholine(out). With respect to regulation, phosphatidylinositol transfer activity is inhibited by N-ethylmaleimide. Functionally, catalyzes the transfer of phosphatidylinositol between membranes. Also catalyzes the transfer of phosphatidylcholine and sphingomyelin between membranes. Required for COPI-mediated retrograde transport from the Golgi to the endoplasmic reticulum; phosphatidylinositol and phosphatidylcholine transfer activity is essential for this function. In Rattus norvegicus (Rat), this protein is Phosphatidylinositol transfer protein beta isoform (Pitpnb).